Reading from the N-terminus, the 66-residue chain is SPbeta prophage-derived uncharacterized protein YosK (66 aa).

The chain is SPbeta prophage-derived uncharacterized protein YosK (yosK) from Bacillus subtilis (strain 168).